The primary structure comprises 479 residues: Dynein regulatory complex subunit 4 (479 aa).

Coiled coils occupy residues 28-93 (RDQL…LADI), 117-170 (RAEA…FNEK), and 210-347 (EVEE…GLKE).

It belongs to the DRC4 family.

The protein localises to the cytoplasm. It is found in the cytoskeleton. Its subcellular location is the flagellum basal body. In terms of biological role, cytoskeletal linker which probably functions in axonemal and non-axonemal dynein regulation. May play a role in the spermatozoa motility. This Drosophila melanogaster (Fruit fly) protein is Dynein regulatory complex subunit 4.